A 382-amino-acid chain; its full sequence is Adaptive-response sensory kinase SasA (382 aa).

A Histidine kinase domain is found at M160 to R382. H163 carries the post-translational modification Phosphohistidine; by autocatalysis.

As to quaternary structure, homooligomerizes. Interacts with KaiC. Participates in the KaiABC clock complex, whose core is composed of a KaiC homohexamer, 6 KaiB and up to 6 KaiA dimers. SasA and KaiB(fs) compete to bind to KaiC.

The catalysed reaction is ATP + protein L-histidine = ADP + protein N-phospho-L-histidine.. Its function is as follows. Member of the two-component regulatory system SasA/RpaA involved in genome-wide circadian gene expression. One of several clock output pathways. Participates in the Kai clock protein complex, the main circadian regulator in cyanobacteria, via its interaction with KaiC. KaiC enhances the autophosphorylation activity of SasA, which then transfers its phosphate group to RpaA to activate it. In addition to its output function, recruits fold-shifted KaiB (KaiB(fs)) to KaiC to cooperatively form the KaiB(6):KaiC(6) complex (independent of SasA kinase activity). Required for robustness of the circadian rhythm of gene expression and is involved in clock output, also required for adaptation to light/dark cycles. This chain is Adaptive-response sensory kinase SasA, found in Crocosphaera subtropica (strain ATCC 51142 / BH68) (Cyanothece sp. (strain ATCC 51142)).